We begin with the raw amino-acid sequence, 316 residues long: DNA-directed RNA polymerase subunit alpha (316 aa).

An alpha N-terminal domain (alpha-NTD) region spans residues 1-232 (MSGNDLFPST…DLFNPLHHCS (232 aa)). The tract at residues 247–316 (KINDILVEEL…LNIYLPKEKY (70 aa)) is alpha C-terminal domain (alpha-CTD).

It belongs to the RNA polymerase alpha chain family. In terms of assembly, in plastids the minimal PEP RNA polymerase catalytic core is composed of four subunits: alpha, beta, beta', and beta''. When a (nuclear-encoded) sigma factor is associated with the core the holoenzyme is formed, which can initiate transcription.

It localises to the plastid. The protein localises to the chloroplast. It carries out the reaction RNA(n) + a ribonucleoside 5'-triphosphate = RNA(n+1) + diphosphate. Functionally, DNA-dependent RNA polymerase catalyzes the transcription of DNA into RNA using the four ribonucleoside triphosphates as substrates. The protein is DNA-directed RNA polymerase subunit alpha of Mesostigma viride (Green alga).